The chain runs to 339 residues: Mitogen-activated protein kinase kinase kinase 18 (339 aa).

Positions Trp3 to Leu263 constitute a Protein kinase domain. ATP contacts are provided by residues Leu9–Val17 and Lys32. The active-site Proton acceptor is the Asp131. The residue at position 301 (Ser301) is a Phosphoserine.

It belongs to the protein kinase superfamily. Ser/Thr protein kinase family. Interacts with ABI1. Binds to MKK3. Associates with SRK2E within the nucleus. Autophosphorylated. Post-translationally, unstable protein degraded by the proteasome pathway; this degradation is promoted by ABI1, but blocked by ABA. Expressed in roots, leaves and flowers.

Its subcellular location is the nucleus. It catalyses the reaction L-seryl-[protein] + ATP = O-phospho-L-seryl-[protein] + ADP + H(+). It carries out the reaction L-threonyl-[protein] + ATP = O-phospho-L-threonyl-[protein] + ADP + H(+). With respect to regulation, kinase activity is activated by abscisic acid (ABA). Inhibited by ABI1. Activated by SRK2E. Functionally, component of the abscisic acid (ABA) signaling pathway that acts as ABA signal transducer in the context of abiotic stresses. Triggers MPK1, MPK2, MPK7 and MPK14 activation in a MKK3-dependent manner and MPK6 activation in a MKK3-independent manner. Mediates the ABA-dependent activation of the MKK3-MPK7 module. Positive regulator of ABA responses leading to the induction of gene expression (e.g. RD29B and RAB18) and involved in various responses including stomatal development, stomatal movement, inhibition of germination and root growth. Promotes leaf senescence. This Arabidopsis thaliana (Mouse-ear cress) protein is Mitogen-activated protein kinase kinase kinase 18.